The sequence spans 513 residues: Cytochrome P450 94A2 (513 aa).

A helical transmembrane segment spans residues 7–24 (ISWLLFSTSLFWFLFLAT). C455 is a binding site for heme.

This sequence belongs to the cytochrome P450 family. It depends on heme as a cofactor. As to expression, weakly expressed in seedlings.

The protein localises to the endoplasmic reticulum membrane. Its function is as follows. Catalyzes the omega-hydroxylation of various fatty acids (FA). The substrate specificity is higher for myristate &gt; laurate = palmitate (C14&gt;C16=C12). The sequence is that of Cytochrome P450 94A2 (CYP94A2) from Vicia sativa (Spring vetch).